The chain runs to 548 residues: Chaperonin GroEL (548 aa).

ATP-binding positions include 29-32 (TMGP), Lys-50, 86-90 (DGTTT), Gly-414, 478-480 (NAA), and Asp-494.

This sequence belongs to the chaperonin (HSP60) family. As to quaternary structure, forms a cylinder of 14 subunits composed of two heptameric rings stacked back-to-back. Interacts with the co-chaperonin GroES.

It localises to the cytoplasm. The enzyme catalyses ATP + H2O + a folded polypeptide = ADP + phosphate + an unfolded polypeptide.. Its function is as follows. Together with its co-chaperonin GroES, plays an essential role in assisting protein folding. The GroEL-GroES system forms a nano-cage that allows encapsulation of the non-native substrate proteins and provides a physical environment optimized to promote and accelerate protein folding. In terms of biological role, may play a protective role against the defense mechanisms generated by the infected macrophages. The protein is Chaperonin GroEL of Legionella pneumophila.